The primary structure comprises 403 residues: Aspartic protease PEP1 (403 aa).

The N-terminal stretch at 1-20 is a signal peptide; the sequence is MVQISQIGAVLAVCSTLTVA. Residues 21-67 constitute a propeptide, activation peptide; the sequence is APTKGKARFNVPQVAVPMKAVHHPAVAYARALHKFGMKVPKAVSDAA. The 319-residue stretch at 82 to 400 folds into the Peptidase A1 domain; it reads YVTQVTVGQG…DTEGPRIGFA (319 aa). The active site involves D98. N159 and N270 each carry an N-linked (GlcNAc...) asparagine glycan. D293 is a catalytic residue. Cysteines 329 and 361 form a disulfide.

It belongs to the peptidase A1 family.

It is found in the secreted. The enzyme catalyses Hydrolysis of proteins with broad specificity. Generally favors hydrophobic residues in P1 and P1', but also accepts Lys in P1, which leads to activation of trypsinogen. Does not clot milk.. Its function is as follows. Secreted aspartic endopeptidase that allows assimilation of proteinaceous substrates. Can catalyze hydrolysis of the major structural proteins of basement membrane, elastin, collagen, and laminin. Thought to play a significant role in virulence. The polypeptide is Aspartic protease PEP1 (PEP1) (Arthroderma benhamiae (strain ATCC MYA-4681 / CBS 112371) (Trichophyton mentagrophytes)).